The following is a 1012-amino-acid chain: DNA polymerase catalytic subunit (1012 aa).

The protein belongs to the DNA polymerase type-B family.

The protein resides in the host nucleus. It carries out the reaction DNA(n) + a 2'-deoxyribonucleoside 5'-triphosphate = DNA(n+1) + diphosphate. The polypeptide is DNA polymerase catalytic subunit (U38) (Human herpesvirus 6A (strain Uganda-1102) (HHV-6 variant A)).